A 227-amino-acid chain; its full sequence is Cytochrome c oxidase subunit 2 (227 aa).

Topologically, residues 1–14 (MAHPAQLGLQDATS) are mitochondrial intermembrane. Residues 15–45 (PVMEELITFHDHALMAMSLISLLVLYALFST) form a helical membrane-spanning segment. The Mitochondrial matrix segment spans residues 46 to 59 (LTTKMTNTNITDAQ). A helical transmembrane segment spans residues 60-87 (EMETIWTILPAIILVLIAFPSLRILYMT). Residues 88–227 (DEVNNPSFTI…IFEMGPVFTL (140 aa)) are Mitochondrial intermembrane-facing. The Cu cation site is built by H161, C196, E198, C200, H204, and M207. Residue E198 coordinates Mg(2+).

This sequence belongs to the cytochrome c oxidase subunit 2 family. In terms of assembly, component of the cytochrome c oxidase (complex IV, CIV), a multisubunit enzyme composed of 14 subunits. The complex is composed of a catalytic core of 3 subunits MT-CO1, MT-CO2 and MT-CO3, encoded in the mitochondrial DNA, and 11 supernumerary subunits COX4I, COX5A, COX5B, COX6A, COX6B, COX6C, COX7A, COX7B, COX7C, COX8 and NDUFA4, which are encoded in the nuclear genome. The complex exists as a monomer or a dimer and forms supercomplexes (SCs) in the inner mitochondrial membrane with NADH-ubiquinone oxidoreductase (complex I, CI) and ubiquinol-cytochrome c oxidoreductase (cytochrome b-c1 complex, complex III, CIII), resulting in different assemblies (supercomplex SCI(1)III(2)IV(1) and megacomplex MCI(2)III(2)IV(2)). Found in a complex with TMEM177, COA6, COX18, COX20, SCO1 and SCO2. Interacts with TMEM177 in a COX20-dependent manner. Interacts with COX20. Interacts with COX16. Requires Cu cation as cofactor.

It localises to the mitochondrion inner membrane. The catalysed reaction is 4 Fe(II)-[cytochrome c] + O2 + 8 H(+)(in) = 4 Fe(III)-[cytochrome c] + 2 H2O + 4 H(+)(out). Component of the cytochrome c oxidase, the last enzyme in the mitochondrial electron transport chain which drives oxidative phosphorylation. The respiratory chain contains 3 multisubunit complexes succinate dehydrogenase (complex II, CII), ubiquinol-cytochrome c oxidoreductase (cytochrome b-c1 complex, complex III, CIII) and cytochrome c oxidase (complex IV, CIV), that cooperate to transfer electrons derived from NADH and succinate to molecular oxygen, creating an electrochemical gradient over the inner membrane that drives transmembrane transport and the ATP synthase. Cytochrome c oxidase is the component of the respiratory chain that catalyzes the reduction of oxygen to water. Electrons originating from reduced cytochrome c in the intermembrane space (IMS) are transferred via the dinuclear copper A center (CU(A)) of subunit 2 and heme A of subunit 1 to the active site in subunit 1, a binuclear center (BNC) formed by heme A3 and copper B (CU(B)). The BNC reduces molecular oxygen to 2 water molecules using 4 electrons from cytochrome c in the IMS and 4 protons from the mitochondrial matrix. This chain is Cytochrome c oxidase subunit 2 (MT-CO2), found in Mandrillus leucophaeus (Drill).